Consider the following 185-residue polypeptide: MLEDVIKETNDKLRSSYEVFLSDLKGIRSGSLSVSILDGVIVSTHMGKLRLNQVASLSVVNNKMLSVQVWDKSTVGAVKDAILTSNLGMNPIVEGSVLRLPVPDLTEERRKELVKVLKKYGDRAKVAVRNIRRDAISRIKVLEKAKEISENDMHALLKKIDKIISEEDARIDDAVSKKETDILKV.

It belongs to the RRF family.

Its subcellular location is the cytoplasm. Functionally, responsible for the release of ribosomes from messenger RNA at the termination of protein biosynthesis. May increase the efficiency of translation by recycling ribosomes from one round of translation to another. This Neorickettsia sennetsu (strain ATCC VR-367 / Miyayama) (Ehrlichia sennetsu) protein is Ribosome-recycling factor.